Consider the following 121-residue polypeptide: Phosphoribosyl-AMP cyclohydrolase (121 aa).

Aspartate 76 contacts Mg(2+). Cysteine 77 contributes to the Zn(2+) binding site. Mg(2+)-binding residues include aspartate 78 and aspartate 80. 2 residues coordinate Zn(2+): cysteine 93 and cysteine 100.

It belongs to the PRA-CH family. Homodimer. Mg(2+) serves as cofactor. Requires Zn(2+) as cofactor.

The protein localises to the cytoplasm. The catalysed reaction is 1-(5-phospho-beta-D-ribosyl)-5'-AMP + H2O = 1-(5-phospho-beta-D-ribosyl)-5-[(5-phospho-beta-D-ribosylamino)methylideneamino]imidazole-4-carboxamide. It functions in the pathway amino-acid biosynthesis; L-histidine biosynthesis; L-histidine from 5-phospho-alpha-D-ribose 1-diphosphate: step 3/9. Functionally, catalyzes the hydrolysis of the adenine ring of phosphoribosyl-AMP. The polypeptide is Phosphoribosyl-AMP cyclohydrolase (Paracoccus denitrificans (strain Pd 1222)).